Consider the following 139-residue polypeptide: Large ribosomal subunit protein uL16 (139 aa).

Positions 1–17 (MLQPKRTKYRKQQKGRM) are enriched in basic residues. Residues 1-25 (MLQPKRTKYRKQQKGRMKGLSQRGH) form a disordered region.

It belongs to the universal ribosomal protein uL16 family. Part of the 50S ribosomal subunit.

Functionally, binds 23S rRNA and is also seen to make contacts with the A and possibly P site tRNAs. This is Large ribosomal subunit protein uL16 from Christiangramia forsetii (strain DSM 17595 / CGMCC 1.15422 / KT0803) (Gramella forsetii).